The chain runs to 360 residues: UDP-N-acetylglucosamine--N-acetylmuramyl-(pentapeptide) pyrophosphoryl-undecaprenol N-acetylglucosamine transferase (360 aa).

UDP-N-acetyl-alpha-D-glucosamine contacts are provided by residues 13–15, arginine 164, serine 192, and glutamine 293; that span reads TGG.

Belongs to the glycosyltransferase 28 family. MurG subfamily.

Its subcellular location is the cell inner membrane. It carries out the reaction di-trans,octa-cis-undecaprenyl diphospho-N-acetyl-alpha-D-muramoyl-L-alanyl-D-glutamyl-meso-2,6-diaminopimeloyl-D-alanyl-D-alanine + UDP-N-acetyl-alpha-D-glucosamine = di-trans,octa-cis-undecaprenyl diphospho-[N-acetyl-alpha-D-glucosaminyl-(1-&gt;4)]-N-acetyl-alpha-D-muramoyl-L-alanyl-D-glutamyl-meso-2,6-diaminopimeloyl-D-alanyl-D-alanine + UDP + H(+). Its pathway is cell wall biogenesis; peptidoglycan biosynthesis. Its function is as follows. Cell wall formation. Catalyzes the transfer of a GlcNAc subunit on undecaprenyl-pyrophosphoryl-MurNAc-pentapeptide (lipid intermediate I) to form undecaprenyl-pyrophosphoryl-MurNAc-(pentapeptide)GlcNAc (lipid intermediate II). The sequence is that of UDP-N-acetylglucosamine--N-acetylmuramyl-(pentapeptide) pyrophosphoryl-undecaprenol N-acetylglucosamine transferase from Chromobacterium violaceum (strain ATCC 12472 / DSM 30191 / JCM 1249 / CCUG 213 / NBRC 12614 / NCIMB 9131 / NCTC 9757 / MK).